A 469-amino-acid chain; its full sequence is IME2-dependent-signaling protein (469 aa).

The residue at position 1 (Met1) is an N-acetylmethionine. At Thr13 the chain carries Phosphothreonine. 3 disordered regions span residues 22 to 55 (KSWS…PATM), 67 to 92 (ARGS…QQQQ), and 117 to 143 (DLTL…PPLT). Phosphoserine is present on residues Ser23, Ser27, and Ser39. Polar residues-rich tracts occupy residues 25-42 (SESQ…SPIG) and 67-82 (ARGS…GSSQ). 5 positions are modified to phosphoserine: Ser122, Ser130, Ser136, Ser147, and Ser148.

Functionally, seems to act indirectly to modify IME2 activity, thus permitting IME2 to carry out later meiotic functions. This chain is IME2-dependent-signaling protein (IDS2), found in Saccharomyces cerevisiae (strain ATCC 204508 / S288c) (Baker's yeast).